A 491-amino-acid polypeptide reads, in one-letter code: Argininosuccinate lyase (491 aa).

This sequence belongs to the lyase 1 family. Argininosuccinate lyase subfamily.

The protein localises to the cytoplasm. It catalyses the reaction 2-(N(omega)-L-arginino)succinate = fumarate + L-arginine. It participates in amino-acid biosynthesis; L-arginine biosynthesis; L-arginine from L-ornithine and carbamoyl phosphate: step 3/3. The protein is Argininosuccinate lyase of Methanosarcina mazei (strain ATCC BAA-159 / DSM 3647 / Goe1 / Go1 / JCM 11833 / OCM 88) (Methanosarcina frisia).